The following is a 282-amino-acid chain: Bifunctional protein FolD (282 aa).

Residues 164-166, I189, and I230 contribute to the NADP(+) site; that span reads GAS.

Belongs to the tetrahydrofolate dehydrogenase/cyclohydrolase family. Homodimer.

The catalysed reaction is (6R)-5,10-methylene-5,6,7,8-tetrahydrofolate + NADP(+) = (6R)-5,10-methenyltetrahydrofolate + NADPH. It carries out the reaction (6R)-5,10-methenyltetrahydrofolate + H2O = (6R)-10-formyltetrahydrofolate + H(+). Its pathway is one-carbon metabolism; tetrahydrofolate interconversion. Catalyzes the oxidation of 5,10-methylenetetrahydrofolate to 5,10-methenyltetrahydrofolate and then the hydrolysis of 5,10-methenyltetrahydrofolate to 10-formyltetrahydrofolate. This is Bifunctional protein FolD from Nitratiruptor sp. (strain SB155-2).